Here is a 602-residue protein sequence, read N- to C-terminus: Elongation factor 4 (602 aa).

In terms of domain architecture, tr-type G spans 6 to 188; sequence DRIRNFCIIA…RIVTRIPPPG (183 aa). Residues 18–23 and 135–138 each bind GTP; these read DHGKST and NKID.

Belongs to the TRAFAC class translation factor GTPase superfamily. Classic translation factor GTPase family. LepA subfamily.

Its subcellular location is the cell membrane. It carries out the reaction GTP + H2O = GDP + phosphate + H(+). In terms of biological role, required for accurate and efficient protein synthesis under certain stress conditions. May act as a fidelity factor of the translation reaction, by catalyzing a one-codon backward translocation of tRNAs on improperly translocated ribosomes. Back-translocation proceeds from a post-translocation (POST) complex to a pre-translocation (PRE) complex, thus giving elongation factor G a second chance to translocate the tRNAs correctly. Binds to ribosomes in a GTP-dependent manner. The sequence is that of Elongation factor 4 from Pelotomaculum thermopropionicum (strain DSM 13744 / JCM 10971 / SI).